The following is a 312-amino-acid chain: E3 ubiquitin-protein ligase RNF126-B (312 aa).

Positions 13, 16, 29, and 32 each coordinate Zn(2+). The C4-type zinc finger occupies 13–32 (CHSCTAEITPRLPEYTCPRC). Disordered stretches follow at residues 41–63 (PETS…NRPS) and 96–139 (GTSG…RNEG). Residues 44-55 (SRNSESNSSNNS) show a composition bias toward low complexity. A compositionally biased stretch (basic and acidic residues) spans 102–115 (EETRDGESRREHQS). Residues 124-134 (PRARMSTRRGA) show a composition bias toward basic residues. An RING-type zinc finger spans residues 228–269 (CPVCKEDYTVGESVRQLPCNHLFHNDCIIPWLEQHDTCPVCR). Residues 275–312 (QNTATNPPGLTDMTFSSSSTSSSSSTSPTDENNTANNS) are disordered. Positions 290-301 (SSSSTSSSSSTS) are enriched in low complexity. Residues 302-312 (PTDENNTANNS) show a composition bias toward polar residues.

The protein localises to the cytoplasm. Its subcellular location is the nucleus. It carries out the reaction S-ubiquitinyl-[E2 ubiquitin-conjugating enzyme]-L-cysteine + [acceptor protein]-L-lysine = [E2 ubiquitin-conjugating enzyme]-L-cysteine + N(6)-ubiquitinyl-[acceptor protein]-L-lysine.. Its pathway is protein modification; protein ubiquitination. E3 ubiquitin-protein ligase that mediates ubiquitination oF target proteins. Depending on the associated E2 ligase, mediates 'Lys-27'-, 'Lys-29'-, 'Lys-48'- and/or 'Lys-63'-linked polyubiquitination of substrates. Part of a BAG6-dependent quality control process ensuring that proteins of the secretory pathway that are mislocalized to the cytosol are degraded by the proteasome. Probably acts by providing the ubiquitin ligase activity associated with the BAG6 complex and be responsible for ubiquitination of the hydrophobic mislocalized proteins and their targeting to the proteasome. This chain is E3 ubiquitin-protein ligase RNF126-B, found in Xenopus laevis (African clawed frog).